Here is a 357-residue protein sequence, read N- to C-terminus: DnaJ homolog subfamily C member 25 (357 aa).

A helical membrane pass occupies residues 19–39; that stretch reads WLLLAPLLLVPLLARPAEALV. The 74-residue stretch at 48–121 folds into the J domain; that stretch reads DCYEVLGVSR…ETRKDYDYML (74 aa). The next 2 membrane-spanning stretches (helical) occupy residues 147–167 and 241–261; these read VVIL…WWNS and LLLF…AWYC.

The protein belongs to the DNAJC25 family.

It localises to the membrane. This chain is DnaJ homolog subfamily C member 25 (Dnajc25), found in Mus musculus (Mouse).